A 181-amino-acid polypeptide reads, in one-letter code: Large ribosomal subunit protein uL10 (181 aa).

The protein belongs to the universal ribosomal protein uL10 family. Part of the ribosomal stalk of the 50S ribosomal subunit. The N-terminus interacts with L11 and the large rRNA to form the base of the stalk. The C-terminus forms an elongated spine to which L12 dimers bind in a sequential fashion forming a multimeric L10(L12)X complex.

Functionally, forms part of the ribosomal stalk, playing a central role in the interaction of the ribosome with GTP-bound translation factors. This Trichormus variabilis (strain ATCC 29413 / PCC 7937) (Anabaena variabilis) protein is Large ribosomal subunit protein uL10.